The primary structure comprises 249 residues: MLIQAVTIFPEMFDSITRYGVTGRANRQGIWQFEAVNPRKFADNRLGYIDDRPFGGGPGMIMMAPPLHAAIEHAKAQSSQTAKVIYLSPQGKPLTHQKAAELAELPHLILLCGRYEGIDERLLQTSVDEEISIGDFVVSGGELPAMMLMDAVLRLVPGVLGDMQSAEQDSFSSGILDCPHYTKPLEFQGMAVPEVLRSGNHGLIAEWRLEQSLRRTLERRPDLLEKRVLIPKESRLLETIRQEQREIQS.

Residues G113 and 133–138 each bind S-adenosyl-L-methionine; that span reads IGDFVV.

It belongs to the RNA methyltransferase TrmD family. As to quaternary structure, homodimer.

The protein localises to the cytoplasm. It catalyses the reaction guanosine(37) in tRNA + S-adenosyl-L-methionine = N(1)-methylguanosine(37) in tRNA + S-adenosyl-L-homocysteine + H(+). In terms of biological role, specifically methylates guanosine-37 in various tRNAs. The protein is tRNA (guanine-N(1)-)-methyltransferase of Neisseria meningitidis serogroup C (strain 053442).